A 183-amino-acid chain; its full sequence is Capsid protein (183 aa).

Residues 136–183 (NAPILSTLPETTVVRRRGRSPRRRTPSPRRRRSQSPRRRRSQSRESQC) form a disordered region. Positions 149–176 (VRRRGRSPRRRTPSPRRRRSQSPRRRRS) are enriched in basic residues. Ser155, Ser162, and Ser170 each carry phosphoserine; by host. One copy of the 1; half-length repeat lies at 155-161 (SPRRRTP). Residues 155–177 (SPRRRTPSPRRRRSQSPRRRRSQ) form a 3 X 8 AA repeats of S-P-R-R-R-[PR]-S-Q region. A Bipartite nuclear localization signal motif is present at residues 158 to 175 (RRTPSPRRRRSQSPRRRR). 2 repeat units span residues 162–169 (SPRRRRSQ) and 170–177 (SPRRRRSQ). The segment at 177-183 (QSRESQC) is RNA binding.

It belongs to the orthohepadnavirus core antigen family. In terms of assembly, homodimerizes, then multimerizes. Interacts with cytosol exposed regions of viral L glycoprotein present in the reticulum-to-Golgi compartment. Interacts with human FLNB. Phosphorylated form interacts with host importin alpha; this interaction depends on the exposure of the NLS, which itself depends upon genome maturation and/or phosphorylation of the capsid protein. Interacts with host NUP153. Phosphorylated by host SRPK1, SRPK2, and maybe protein kinase C or GAPDH. Phosphorylation is critical for pregenomic RNA packaging. Protein kinase C phosphorylation is stimulated by HBx protein and may play a role in transport of the viral genome to the nucleus at the late step during the viral replication cycle.

The protein localises to the virion. It localises to the host cytoplasm. Its function is as follows. Self assembles to form an icosahedral capsid. Most capsids appear to be large particles with an icosahedral symmetry of T=4 and consist of 240 copies of capsid protein, though a fraction forms smaller T=3 particles consisting of 180 capsid proteins. Entering capsids are transported along microtubules to the nucleus. Phosphorylation of the capsid is thought to induce exposure of nuclear localization signal in the C-terminal portion of the capsid protein that allows binding to the nuclear pore complex via the importin (karyopherin-) alpha and beta. Capsids are imported in intact form through the nuclear pore into the nuclear basket, where it probably binds NUP153. Only capsids that contain the mature viral genome can release the viral DNA and capsid protein into the nucleoplasm. Immature capsids get stuck in the basket. Capsids encapsulate the pre-genomic RNA and the P protein. Pre-genomic RNA is reverse-transcribed into DNA while the capsid is still in the cytoplasm. The capsid can then either be directed to the nucleus, providing more genomes for transcription, or bud through the endoplasmic reticulum to provide new virions. This is Capsid protein from Homo sapiens (Human).